Consider the following 301-residue polypeptide: Glutathione transport system permease protein GsiD (301 aa).

6 helical membrane passes run 37–57 (VAVA…WAQY), 103–123 (LAAG…LGLL), 141–161 (VLFA…MGSG), 162–182 (MANV…RLVR), 220–240 (IVVF…SLSF), and 264–284 (VIAP…VLAF). The 190-residue stretch at 99-288 (TRISLAAGIF…LTVLAFNLLG (190 aa)) folds into the ABC transmembrane type-1 domain.

The protein belongs to the binding-protein-dependent transport system permease family. The complex is composed of two ATP-binding proteins (GsiA), two transmembrane proteins (GsiC and GsiD) and a solute-binding protein (GsiB).

The protein resides in the cell inner membrane. Functionally, part of the ABC transporter complex GsiABCD involved in glutathione import. Probably responsible for the translocation of the substrate across the membrane. The sequence is that of Glutathione transport system permease protein GsiD from Pectobacterium atrosepticum (strain SCRI 1043 / ATCC BAA-672) (Erwinia carotovora subsp. atroseptica).